Here is a 116-residue protein sequence, read N- to C-terminus: Large ribosomal subunit protein uL18 (116 aa).

The protein belongs to the universal ribosomal protein uL18 family. As to quaternary structure, part of the 50S ribosomal subunit; part of the 5S rRNA/L5/L18/L25 subcomplex. Contacts the 5S and 23S rRNAs.

Functionally, this is one of the proteins that bind and probably mediate the attachment of the 5S RNA into the large ribosomal subunit, where it forms part of the central protuberance. The chain is Large ribosomal subunit protein uL18 from Saccharophagus degradans (strain 2-40 / ATCC 43961 / DSM 17024).